The primary structure comprises 148 residues: MKYQQLENLEAGWKWMYLFNKHRMGESITCYIDSSEEQQMVNVFLKLEHEPVHVLEWIQKHMNPDLQNKLKQAIRAKRKRHFNAEQEHTRKKSIDLDYRVWEKLSLRAQELDSTLSDTIEYLLSEASRTEKASQTVSSLKADLHELLK.

Belongs to the MatP family. Homodimer.

The protein localises to the cytoplasm. Required for spatial organization of the terminus region of the chromosome (Ter macrodomain) during the cell cycle. Prevents early segregation of duplicated Ter macrodomains during cell division. Binds specifically to matS, which is a 13 bp signature motif repeated within the Ter macrodomain. The chain is Macrodomain Ter protein from Aliivibrio salmonicida (strain LFI1238) (Vibrio salmonicida (strain LFI1238)).